A 334-amino-acid chain; its full sequence is Mediator of RNA polymerase II transcription subunit 4 (334 aa).

Positions 71–100 (QEREQLIRTLEAHVEKRDEVIQQLETNLKS) form a coiled coil. Positions 193 to 334 (PLITSPSASS…ASKKTGSSNK (142 aa)) are disordered. Polar residues-rich tracts occupy residues 194–206 (LITS…SNGG) and 251–282 (NEKQ…SSPN).

It belongs to the Mediator complex subunit 4 family. As to quaternary structure, component of the Mediator complex.

It localises to the nucleus. Functionally, component of the Mediator complex, a coactivator involved in the regulated transcription of nearly all RNA polymerase II-dependent genes. Mediator functions as a bridge to convey information from gene-specific regulatory proteins to the basal RNA polymerase II transcription machinery. Mediator is recruited to promoters by direct interactions with regulatory proteins and serves as a scaffold for the assembly of a functional preinitiation complex with RNA polymerase II and the general transcription factors. In Caenorhabditis elegans, this protein is Mediator of RNA polymerase II transcription subunit 4 (mdt-4).